Consider the following 126-residue polypeptide: Methylglyoxal synthase (126 aa).

Residues 1 to 126 (MAGGKCIALI…AERLIKTLNH (126 aa)) form the MGS-like domain. Substrate-binding positions include histidine 12, lysine 16, 38 to 41 (TGTT), and 59 to 60 (SG). Aspartate 65 serves as the catalytic Proton donor/acceptor. Residue histidine 92 participates in substrate binding.

This sequence belongs to the methylglyoxal synthase family.

The catalysed reaction is dihydroxyacetone phosphate = methylglyoxal + phosphate. Its function is as follows. Catalyzes the formation of methylglyoxal from dihydroxyacetone phosphate. This Rhizobium rhizogenes (strain K84 / ATCC BAA-868) (Agrobacterium radiobacter) protein is Methylglyoxal synthase.